Consider the following 632-residue polypeptide: Chaperone protein DnaK (632 aa).

Thr198 carries the post-translational modification Phosphothreonine; by autocatalysis. The segment at Arg524 to Arg557 is disordered.

This sequence belongs to the heat shock protein 70 family.

Acts as a chaperone. In Nitrobacter hamburgensis (strain DSM 10229 / NCIMB 13809 / X14), this protein is Chaperone protein DnaK.